The sequence spans 261 residues: [LysW]-aminoadipate/[LysW]-glutamate kinase (261 aa).

Substrate-binding positions include 35 to 36 (GG), Arg-62, and Asn-166.

The protein belongs to the acetylglutamate kinase family. LysZ subfamily.

Its subcellular location is the cytoplasm. It catalyses the reaction [amino-group carrier protein]-C-terminal-N-(1,4-dicarboxybutan-1-yl)-L-glutamine + ATP = [amino-group carrier protein]-C-terminal-N-(1-carboxy-5-phosphooxy-5-oxopentan-1-yl)-L-glutamine + ADP. It carries out the reaction [amino-group carrier protein]-C-terminal-gamma-(L-glutamyl)-L-glutamate + ATP = [amino-group carrier protein]-C-terminal-gamma-(5-phospho-L-glutamyl)-L-glutamate + ADP. It participates in amino-acid biosynthesis; L-lysine biosynthesis via AAA pathway; L-lysine from L-alpha-aminoadipate (Thermus route): step 2/5. It functions in the pathway amino-acid biosynthesis; L-arginine biosynthesis. Functionally, involved in both the arginine and lysine biosynthetic pathways. Phosphorylates the LysW-bound precursors glutamate (for arginine biosynthesis), respectively alpha-aminoadipate (for lysine biosynthesis). This chain is [LysW]-aminoadipate/[LysW]-glutamate kinase, found in Sulfolobus acidocaldarius (strain ATCC 33909 / DSM 639 / JCM 8929 / NBRC 15157 / NCIMB 11770).